Reading from the N-terminus, the 102-residue chain is Lipopolysaccharide assembly protein A (102 aa).

Topologically, residues 1–2 are cytoplasmic; it reads MK. The helical transmembrane segment at 3 to 23 threads the bilayer; sequence YLLIFLLVLAIFVISVTLGAQ. Over 24 to 43 the chain is Periplasmic; it reads NDQQVTFNYLLAQGEYRIST. Residues 44–64 form a helical membrane-spanning segment; that stretch reads LLAVLFAAGFAIGWLICGLFW. Positions 64–92 form a coiled coil; the sequence is WLRVRVSLARAERKIKRLENQLSPATDVA. The Cytoplasmic segment spans residues 65–102; the sequence is LRVRVSLARAERKIKRLENQLSPATDVAVVPHSSAAKE.

It belongs to the LapA family.

Its subcellular location is the cell inner membrane. Its function is as follows. Involved in the assembly of lipopolysaccharide (LPS). The chain is Lipopolysaccharide assembly protein A from Escherichia coli (strain K12).